We begin with the raw amino-acid sequence, 334 residues long: Ornithine carbamoyltransferase (334 aa).

Residues serine 57–threonine 60, glutamine 84, arginine 108, and histidine 135–glutamine 138 contribute to the carbamoyl phosphate site. L-ornithine is bound by residues asparagine 169, aspartate 233, and serine 237–methionine 238. Carbamoyl phosphate-binding positions include cysteine 275–leucine 276 and arginine 320.

The protein belongs to the aspartate/ornithine carbamoyltransferase superfamily. OTCase family.

Its subcellular location is the cytoplasm. The catalysed reaction is carbamoyl phosphate + L-ornithine = L-citrulline + phosphate + H(+). It participates in amino-acid biosynthesis; L-arginine biosynthesis; L-arginine from L-ornithine and carbamoyl phosphate: step 1/3. Functionally, reversibly catalyzes the transfer of the carbamoyl group from carbamoyl phosphate (CP) to the N(epsilon) atom of ornithine (ORN) to produce L-citrulline. The polypeptide is Ornithine carbamoyltransferase (argF) (Pasteurella multocida (strain Pm70)).